Reading from the N-terminus, the 930-residue chain is MVARNLYELLEHAALDPQDNKISVYNPGNVDQVGKSLTYADLLNTAKTNALLLPQVKGIRPDSVILLHFDNHFDAIVWFWSVIAAGYVPAISTPFTNDPEGRKKHLIHLKTLLKDPVIITQESLAKAFSIVDGLNTHTIESIQKFDAPHILNGVHATAKQHDDLAVLMLTSGSSGNAKAVCLRHGQLLQSIAGKSTHHGISKSDVFLNWIGLDHVANLTETHLQAMQHAAPQFHVQASDLLVDPLILLKLIDRHRITVTFAPNFFIASVRVALEHPEPFLHGKEPDLTCFRIMISGGEANVVEASQALTTLFQKYGVSSEFIRPGFGMTETCAGSIYSRECPSYDVSNKWEFASLGTCIPGLQMRISSDSGEILSMNQVGNLELFGPILFHEYYNNPVATAEAFTADHWFRTGDHASIDGNGRLSLAGRAKETIIVNGVKYFPHELETAIEDALIPGLTPSYTVVFPHRPKNSQTEAVCVVYLPSYEPEDVLARVGVADAISKISIMQTGVKPFQIIPLDKTLLPKSSLGKLSRAKTRAAFEAGKYEVFQKLNDDAIHAYRATQNQAPSNETEATILHVFADLFEIPEADIGVNTSLFEMGVSSIEIIKFKQRIQTELKLKVEIPVITMLTNPTIRGLAGTLETLMGPQVYSPKVTLQAEGKKTPLWLVHPGVGEVLVFLNLAKFIVDRPIHALRARGFDGEPFFEDIAEVVSTYHQAIKEEQPEGPYAIAGYSYGSMLAFEVSKVLEANGDKVEFLGVFNLPPHIKFRMRQLDWVEVLLNLSYFLDLMTEEEAHRISPEMHELSNSLGNDKVLDYILERAPRERMHEMALDRKKMSTWADLAYRMQAIAQDYDPSGRVRNMDIFYAIPLVAVAKSKKEWVDNHLVKWRGFVDEEPHWHEVDGAHYTMLGPDNIHTFQKTLRASLEERGL.

Residues 15 to 436 form an adenylation (A) domain region; it reads LDPQDNKISV…AGRAKETIIV (422 aa). Residues 567–646 enclose the Carrier domain; sequence APSNETEATI…GLAGTLETLM (80 aa). Ser-604 bears the O-(pantetheine 4'-phosphoryl)serine mark. The thioesterase (TE) domain stretch occupies residues 665-914; the sequence is PLWLVHPGVG…HYTMLGPDNI (250 aa).

The protein belongs to the NRP synthetase family.

The catalysed reaction is 2 3-phenylpyruvate + 2 ATP = polyporic acid + 2 AMP + 2 diphosphate + H(+). The protein operates within secondary metabolite biosynthesis. With respect to regulation, hydroxyphenylpyruvate acts more like a competitive inhibitor rather than a substrate. Nonribosomal peptide synthetase that mediates the biosynthesis of polyporic acid via the condensation of 2 phenylpyruvate units. Polyporic acid is further hydroxylaed by the cytochrome P450 monooxygenase MO6277 into less toxic ascocorynin. The chain is Nonribosomal peptide synthetase acyN from Ascocoryne sarcoides (Purple jellydisc fungus).